Reading from the N-terminus, the 113-residue chain is Protein AaeX (113 aa).

Transmembrane regions (helical) follow at residues 3–23 (LLPV…EMIL) and 43–63 (FVWH…YLIS).

The protein belongs to the AaeX family.

It localises to the cell membrane. This is Protein AaeX from Sodalis glossinidius (strain morsitans).